The sequence spans 761 residues: Autophagy-related protein 13 (761 aa).

3 stretches are compositionally biased toward low complexity: residues 1–10 (MLSDFKQQQQ), 290–303 (SSSVSPLSSGTSLK), and 327–340 (STSPPVQSPSISQP). Disordered regions lie at residues 1–25 (MLSDFKQQQQQKHHSHNPPNSHDDT), 277–367 (FHKR…SNKS), 398–456 (ISGT…QSDL), 488–507 (DLRLGGGGGGGNSSVHNMSI), 544–642 (HSSR…SSIS), and 691–761 (YQNV…SRNF). Composition is skewed to polar residues over residues 344–367 (PIQNQPSVPSSSLERRVSITSNKS) and 400–411 (GTSVPRSFSSST). A compositionally biased stretch (low complexity) spans 429 to 444 (RFASSFGSRASRRYSS). Over residues 445–456 (TSIRQQTPQSDL) the composition is skewed to polar residues. The segment covering 566 to 590 (QQQQQQQQNQQQSQSPHTNTTSSIH) has biased composition (low complexity). The span at 600–613 (RMKDARPRSEDHQQ) shows a compositional bias: basic and acidic residues. Positions 614-631 (TKFSAARRSSNISPTTAV) are enriched in polar residues. The segment covering 632 to 642 (PSSIGTPSSIS) has biased composition (low complexity). Over residues 695–709 (FDDDDEDDNDEEEGD) the composition is skewed to acidic residues. Residues 710-720 (REGNQLHEGRN) show a composition bias toward basic and acidic residues. The segment covering 721–730 (STESSQNQSK) has biased composition (polar residues).

It belongs to the ATG13 family. Fungi subfamily. As to quaternary structure, interacts with ATG1 to form the ATG1-ATG13 kinase complex.

Its subcellular location is the cytoplasm. It is found in the preautophagosomal structure. Its function is as follows. Plays a key role in autophagy. Activates the atg1 kinase in a nutritional condition dependent manner through the TOR pathway, leading to autophagy. Also involved in cytoplasm to vacuole transport (Cvt) and more specifically in Cvt vesicle formation. Seems to play a role in the switching machinery regulating the conversion between the Cvt pathway and autophagy. Finally, plays an important role in biofilm formation and resistance to antifungal compounds such as fluconazole, itraconazole, terbinafine and caspofungin. This is Autophagy-related protein 13 from Candida albicans (strain SC5314 / ATCC MYA-2876) (Yeast).